The sequence spans 874 residues: Valine--tRNA ligase (874 aa).

The interval 1 to 22 (MTENSQQPQPAPSTELPTQYTP) is disordered. The short motif at 57 to 67 (PNVTGSLHLGH) is the 'HIGH' region element. The 'KMSKS' region signature appears at 531 to 535 (KMSKS). Lys-534 contacts ATP. Residues 805–871 (VIDFAAERKR…TRITAQLEKL (67 aa)) adopt a coiled-coil conformation.

It belongs to the class-I aminoacyl-tRNA synthetase family. ValS type 1 subfamily. In terms of assembly, monomer.

Its subcellular location is the cytoplasm. It carries out the reaction tRNA(Val) + L-valine + ATP = L-valyl-tRNA(Val) + AMP + diphosphate. Functionally, catalyzes the attachment of valine to tRNA(Val). As ValRS can inadvertently accommodate and process structurally similar amino acids such as threonine, to avoid such errors, it has a 'posttransfer' editing activity that hydrolyzes mischarged Thr-tRNA(Val) in a tRNA-dependent manner. This chain is Valine--tRNA ligase, found in Streptomyces coelicolor (strain ATCC BAA-471 / A3(2) / M145).